The primary structure comprises 397 residues: Corticosteroid-binding globulin (397 aa).

Positions 1-22 are cleaved as a signal peptide; that stretch reads MSLALYTCLFWLCTSGLWTTQA. N-linked (GlcNAc...) asparagine glycans are attached at residues N89, N169, N217, and N232. Residue Q247 coordinates cortisol. N253 is a glycosylation site (N-linked (GlcNAc...) asparagine). Residue D279 participates in cortisol binding. An N-linked (GlcNAc...) asparagine glycan is attached at N320. W385 lines the cortisol pocket.

The protein belongs to the serpin family. In terms of tissue distribution, expressed by the liver; secreted in plasma.

The protein resides in the secreted. Functionally, major transport protein for glucocorticoids and progestins in the blood of almost all vertebrate species. This Mus musculus (Mouse) protein is Corticosteroid-binding globulin (Serpina6).